The following is a 338-amino-acid chain: RNA 3'-terminal phosphate cyclase (338 aa).

ATP-binding positions include Gln-103 and 283–287; that span reads YLADQ. His-308 (tele-AMP-histidine intermediate) is an active-site residue.

This sequence belongs to the RNA 3'-terminal cyclase family. Type 1 subfamily.

It localises to the cytoplasm. The enzyme catalyses a 3'-end 3'-phospho-ribonucleotide-RNA + ATP = a 3'-end 2',3'-cyclophospho-ribonucleotide-RNA + AMP + diphosphate. Catalyzes the conversion of 3'-phosphate to a 2',3'-cyclic phosphodiester at the end of RNA. The mechanism of action of the enzyme occurs in 3 steps: (A) adenylation of the enzyme by ATP; (B) transfer of adenylate to an RNA-N3'P to produce RNA-N3'PP5'A; (C) and attack of the adjacent 2'-hydroxyl on the 3'-phosphorus in the diester linkage to produce the cyclic end product. The biological role of this enzyme is unknown but it is likely to function in some aspects of cellular RNA processing. In Shigella boydii serotype 4 (strain Sb227), this protein is RNA 3'-terminal phosphate cyclase.